Reading from the N-terminus, the 32-residue chain is U21-ctenitoxin-Co1a (32 aa).

3 disulfides stabilise this stretch: C3–C17, C10–C21, and C16–C30.

As to expression, expressed by the venom gland.

The protein localises to the secreted. In terms of biological role, not toxic to mice by intracerebroventricular injection. This chain is U21-ctenitoxin-Co1a, found in Ctenus ornatus (Brazilian spider).